The sequence spans 467 residues: Uronate isomerase (467 aa).

Belongs to the metallo-dependent hydrolases superfamily. Uronate isomerase family.

The enzyme catalyses D-glucuronate = D-fructuronate. It carries out the reaction aldehydo-D-galacturonate = keto-D-tagaturonate. It functions in the pathway carbohydrate metabolism; pentose and glucuronate interconversion. The sequence is that of Uronate isomerase from Histophilus somni (strain 2336) (Haemophilus somnus).